Reading from the N-terminus, the 1015-residue chain is MPSDSDDVAAVKQPWSQLIVDISNFLSEHPQSKTSQALLPSCNGVWSDEEKLELIEAFGHKKQSHLTKSGVKAVLAAFEGDRTQPDVIFLCRLLHLIFSHFSSENDRKKEKYIVKCDVIATLTRITRKRIIMTLDVTDESSIDHNLDEVLWKLLHKIGLKDPRVSLKVRMGGLISPMCKLFIQKDTLPELFLPFFIKISRSPRNGQAIGRYEGFMTRLLVKIKALDASDQTSQVLLLDKHLQLLFFTMKNKRTRTQLLRENICKYLLEVLRRHLASSSNSRPTRLLSSLFGTFDKSLSAAHTEVVIGTIAILRLLSNFKKARDELKNLQVLDICSRELKEFWSDEWKTGPKSRIVDSLSALCLRCMSPLPYPLETRRFPIDFPLPTATPSTPGGHGRIRNSSSINISFDNGRSSDEDGMDEEDEAFVRDDDDEGKDDRGSDDDDGKDDDEINGALPKTTRLNPQQLAKYAPFFVENEQGTLQPTFSMIYQTNQESWRSICEKTRHVMPIHHHLPIEMFNTPTRIREKTAKTSNNMKKMIIEELDKPERSATSNQVIYDLDTAAFDGLPSPELPFVTGGGKLDTSKDLQFDSRFESGNLRMVIQVAPTHYELFLSPDVNQLRDHYQWFFFQVSNMRKSVKYTFEIVNCLKSTSLYSQGMQPVMYSMMESANGWRRVGENVCYFRNLYINENEEKKNVEEQKKKKYYYSIRFNVTFQNTGDICYIAYHYPYTYSFLNSSLSMLKKRKQENVYCREDVIGHSLAGNPIKMLTITTPASAAEIAAREVIVLSARVHPGETNASWIMQGILENLLCRQSNEMYRLRESFIFKIVPMINPDGVTNGSHRCSLAGIDLNRMWDRPNEALHPEVFATKAIIQYLCEVANKKPFAYVDIHGHSKKWDYFVYGNNASESWRADDVLDVGAAQLEEELHLALPKALEATCPSRFNASECRFNITRAKESSARVNVWRQFGVSTAYTLESTFCGFHKGQNSGYQINTSDLKEIGRDLLHSFLEMTKT.

Residues 384 to 462 (LPTATPSTPG…GALPKTTRLN (79 aa)) are disordered. The span at 416–451 (EDGMDEEDEAFVRDDDDEGKDDRGSDDDDGKDDDEI) shows a compositional bias: acidic residues. Residues 727–1013 (YPYTYSFLNS…DLLHSFLEMT (287 aa)) form the Peptidase M14 domain. Residues His792, Glu795, and His891 each coordinate Zn(2+). Glu977 acts as the Proton donor/acceptor in catalysis.

This sequence belongs to the peptidase M14 family. The cofactor is Zn(2+). As to expression, in hermaphrodites and males, expressed in amphid and IL2 ciliated sensory neurons. In males, expressed in CEM head neurons, RnB and HOB tail neurons, and in gubernacular erector and retractor muscles.

It localises to the perikaryon. The protein localises to the cell projection. The protein resides in the cilium. Its subcellular location is the dendrite. Its function is as follows. Catalyzes the deglutamylation of polyglutamate side chains generated by post-translational polyglutamylation of proteins such as tubulins. Via the deglutamylation of tubulin, regulates the localization and velocity of kinesin motors and the structural integrity of microtubules in sensory cilia. In male CEM sensory neurons, regulates the cilia release of bioactive extracellular vesicles. Also regulates microtubule dynamics in uterine muscle cells. The chain is Cytosolic carboxypeptidase 1 from Caenorhabditis elegans.